A 207-amino-acid chain; its full sequence is Interferon kappa (207 aa).

An N-terminal signal peptide occupies residues 1–27 (MSTKPDMIQKCLWLEILMGIFIAGTLS). Cystine bridges form between Cys30/Cys128 and Cys59/Cys181. The stretch at 118–148 (LDQQAEYLNQCLEEDKNENEDMKEMKENEMK) forms a coiled coil.

Belongs to the alpha/beta interferon family. In terms of tissue distribution, expressed in keratinocytes, monocytes and in resting dendritic cells.

The protein resides in the secreted. Functionally, may play a role in the regulation of immune cell function. Cytokine that imparts cellular protection against viral infection in a species-specific manner. Activates the interferon-stimulated response element signaling pathway. It is able to directly modulate cytokine release from monocytes and dendritic cells. Binds heparin. The protein is Interferon kappa (IFNK) of Homo sapiens (Human).